Here is a 740-residue protein sequence, read N- to C-terminus: Phosphoribosylformylglycinamidine synthase subunit PurL (740 aa).

H49 is an active-site residue. ATP contacts are provided by Y52 and K91. Residue E93 participates in Mg(2+) binding. Substrate-binding positions include 94 to 97 (SHNH) and R116. Residue H95 is the Proton acceptor of the active site. Mg(2+) is bound at residue D117. Q245 contributes to the substrate binding site. D273 lines the Mg(2+) pocket. 317–319 (ESQ) is a substrate binding site. ATP-binding residues include D501 and G538. N539 contributes to the Mg(2+) binding site. S541 provides a ligand contact to substrate.

This sequence belongs to the FGAMS family. As to quaternary structure, monomer. Part of the FGAM synthase complex composed of 1 PurL, 1 PurQ and 2 PurS subunits.

The protein localises to the cytoplasm. It catalyses the reaction N(2)-formyl-N(1)-(5-phospho-beta-D-ribosyl)glycinamide + L-glutamine + ATP + H2O = 2-formamido-N(1)-(5-O-phospho-beta-D-ribosyl)acetamidine + L-glutamate + ADP + phosphate + H(+). It participates in purine metabolism; IMP biosynthesis via de novo pathway; 5-amino-1-(5-phospho-D-ribosyl)imidazole from N(2)-formyl-N(1)-(5-phospho-D-ribosyl)glycinamide: step 1/2. Functionally, part of the phosphoribosylformylglycinamidine synthase complex involved in the purines biosynthetic pathway. Catalyzes the ATP-dependent conversion of formylglycinamide ribonucleotide (FGAR) and glutamine to yield formylglycinamidine ribonucleotide (FGAM) and glutamate. The FGAM synthase complex is composed of three subunits. PurQ produces an ammonia molecule by converting glutamine to glutamate. PurL transfers the ammonia molecule to FGAR to form FGAM in an ATP-dependent manner. PurS interacts with PurQ and PurL and is thought to assist in the transfer of the ammonia molecule from PurQ to PurL. The chain is Phosphoribosylformylglycinamidine synthase subunit PurL from Sulfurovum sp. (strain NBC37-1).